The following is a 98-amino-acid chain: Small ribosomal subunit protein eS24 (98 aa).

The protein belongs to the eukaryotic ribosomal protein eS24 family.

This Thermococcus sibiricus (strain DSM 12597 / MM 739) protein is Small ribosomal subunit protein eS24.